The chain runs to 687 residues: MERVNDASCGPSGCYTYQVSRHSTEMLHNLNQQRKNGGRFCDVLLRVGDESFPAHRAVLAACSEYFESVFSAQLGDGGAADGGPADVGGATAAPGGGAGGSRELEMHTISSKVFGDILDFAYTSRIVVRLESFPELMTAAKFLLMRSVIEICQEVIKQSNVQILVPPARADIMLFRPPGTSDLGFPLDMTNGAALAANSNGIAGSMQPEEEAARAAGAAIAGQASLPVLPGVDRLPMVAGPLSPQLLTSPFPSVASSAPPLTGKRGRGRPRKANLLDSMFGSPGGLREAGILPCGLCGKVFTDANRLRQHEAQHGVTSLQLGYIDLPPPRLGENGLPISEDPDGPRKRSRTRKQVACEICGKIFRDVYHLNRHKLSHSGEKPYSCPVCGLRFKRKDRMSYHVRSHDGSVGKPYICQSCGKGFSRPDHLNGHIKQVHTSERPHKCQTCNASFATRDRLRSHLACHEDKVPCQVCGKYLRAAYMADHLKKHSEGPSNFCSICNRGFSSASYLKVHVKTHHGVPLPQVSRHQEPILNGGAAFHCARTYGNKEGQKCSHQDPIESSDSYGDLSDASDLKTPEKQSANGSFSCDMAVPKNKMESDGEKKYPCPECGSFFRSKSYLNKHIQKVHVRALGGPLGDLGPALGSPFSPQQNMSLLESFGFQIVQSAFASSLVDPEVDQQPMGPEGK.

In terms of domain architecture, BTB spans 41–130 (CDVLLRVGDE…AYTSRIVVRL (90 aa)). Residue Lys-112 forms a Glycyl lysine isopeptide (Lys-Gly) (interchain with G-Cter in SUMO2) linkage. Residues 250 to 260 (PFPSVASSAPP) are compositionally biased toward low complexity. Residues 250 to 278 (PFPSVASSAPPLTGKRGRGRPRKANLLDS) are disordered. Residues 264–276 (KRGRGRPRKANLL) constitute a DNA-binding region (a.T hook). Lys-272 is covalently cross-linked (Glycyl lysine isopeptide (Lys-Gly) (interchain with G-Cter in SUMO2)). Phosphoserine is present on Ser-282. The segment at 292 to 314 (LPCGLCGKVFTDANRLRQHEAQH) adopts a C2H2-type 1 zinc-finger fold. The disordered stretch occupies residues 332–351 (GENGLPISEDPDGPRKRSRT). C2H2-type zinc fingers lie at residues 355–377 (VACEICGKIFRDVYHLNRHKLSH), 383–405 (YSCPVCGLRFKRKDRMSYHVRSH), 413–436 (YICQSCGKGFSRPDHLNGHIKQVH), 442–464 (HKCQTCNASFATRDRLRSHLACH), and 495–518 (NFCSICNRGFSSASYLKVHVKTHH). Positions 549–558 (EGQKCSHQDP) are enriched in basic and acidic residues. Residues 549 to 603 (EGQKCSHQDPIESSDSYGDLSDASDLKTPEKQSANGSFSCDMAVPKNKMESDGEK) are disordered. The C2H2-type 7 zinc-finger motif lies at 605–628 (YPCPECGSFFRSKSYLNKHIQKVH).

It belongs to the krueppel C2H2-type zinc-finger protein family. As to quaternary structure, homodimer. Interacts with RNF4. Interacts (via C-terminus) with TP53; this interaction inhibits TP53 ability to activate transcription. Ubiquitous.

Its subcellular location is the nucleus. In terms of biological role, transcriptional regulator that plays a role in many biological processes such as embryogenesis, senescence, T-cell development or neurogenesis. Interacts with the TP53 protein to control genes that are important in proliferation and in the DNA-damage response. Mechanistically, the interaction inhibits the DNA binding and transcriptional activity of TP53/p53. Part of the transcriptional network modulating regulatory T-cell development and controls the generation of the regulatory T-cell pool under homeostatic conditions. (Microbial infection) Plays a positive role in viral cDNA synthesis. The protein is POZ-, AT hook-, and zinc finger-containing protein 1 (PATZ1) of Homo sapiens (Human).